A 374-amino-acid chain; its full sequence is Glutamate 5-kinase (374 aa).

Residue K16 participates in ATP binding. The substrate site is built by S56, D143, and N155. Residues 175-176 (TD) and 217-223 (SGGMLTK) each bind ATP. Positions 282 to 360 (RGALILDDGA…SNIGAILGYK (79 aa)) constitute a PUA domain.

It belongs to the glutamate 5-kinase family.

Its subcellular location is the cytoplasm. The enzyme catalyses L-glutamate + ATP = L-glutamyl 5-phosphate + ADP. It participates in amino-acid biosynthesis; L-proline biosynthesis; L-glutamate 5-semialdehyde from L-glutamate: step 1/2. Functionally, catalyzes the transfer of a phosphate group to glutamate to form L-glutamate 5-phosphate. The protein is Glutamate 5-kinase of Marinomonas sp. (strain MWYL1).